Consider the following 340-residue polypeptide: UPF0324 membrane protein OB3406 (340 aa).

The next 9 membrane-spanning stretches (helical) occupy residues S12 to C31, L36 to L58, G94 to A116, S126 to V148, T155 to Y177, I215 to Y237, I257 to L276, V281 to V303, and V315 to M337.

This sequence belongs to the UPF0324 family.

Its subcellular location is the cell membrane. In Oceanobacillus iheyensis (strain DSM 14371 / CIP 107618 / JCM 11309 / KCTC 3954 / HTE831), this protein is UPF0324 membrane protein OB3406.